The sequence spans 58 residues: Preprotein translocase subunit SecG (58 aa).

Topologically, residues 1 to 33 are cytoplasmic; the sequence is MARRKKYEGLNPFVAAGLIKFSEEGEMERIKLS. The chain crosses the membrane as a helical span at residues 34-55; that stretch reads PKAAIAVSAAIIAALIIINLLL. The Extracellular portion of the chain corresponds to 56–58; that stretch reads PPL.

It belongs to the SEC61-beta family. Component of the protein translocase complex. Heterotrimer consisting of alpha (SecY), beta (SecG) and gamma (SecE) subunits. Can form oligomers of the heterotrimer.

The protein localises to the cell membrane. Its function is as follows. Involved in protein export. The function of the beta subunit is unknown, but it may be involved in stabilization of the trimeric complex. In Pyrobaculum arsenaticum (strain DSM 13514 / JCM 11321 / PZ6), this protein is Preprotein translocase subunit SecG.